Consider the following 500-residue polypeptide: NAD(P)H-quinone oxidoreductase chain 4, chloroplastic (500 aa).

Helical transmembrane passes span 4–24 (FPWL…MLFL), 35–55 (YTIC…CYNF), 87–107 (IGTI…AFPV), 113–130 (LFHF…GSFS), 134–154 (LLLF…LLSM), 167–187 (FILY…GISL), 211–231 (IILY…IPLH), 242–262 (HYST…YGLV), 272–292 (AHSM…IYAA), 305–325 (IAYS…SITD), 330–350 (GAIL…FLAG), 386–406 (LALP…GIIT), 416–436 (ILII…LLSM), and 466–486 (ISSL…LALA).

This sequence belongs to the complex I subunit 4 family.

It is found in the plastid. It localises to the chloroplast thylakoid membrane. It catalyses the reaction a plastoquinone + NADH + (n+1) H(+)(in) = a plastoquinol + NAD(+) + n H(+)(out). It carries out the reaction a plastoquinone + NADPH + (n+1) H(+)(in) = a plastoquinol + NADP(+) + n H(+)(out). The chain is NAD(P)H-quinone oxidoreductase chain 4, chloroplastic from Aethionema grandiflorum (Persian stone-cress).